A 189-amino-acid polypeptide reads, in one-letter code: Large ribosomal subunit protein uL5 (189 aa).

The protein belongs to the universal ribosomal protein uL5 family. In terms of assembly, part of the 50S ribosomal subunit; part of the 5S rRNA/L5/L18/L25 subcomplex. Contacts the 5S rRNA and the P site tRNA. Forms a bridge to the 30S subunit in the 70S ribosome.

Its function is as follows. This is one of the proteins that bind and probably mediate the attachment of the 5S RNA into the large ribosomal subunit, where it forms part of the central protuberance. In the 70S ribosome it contacts protein S13 of the 30S subunit (bridge B1b), connecting the 2 subunits; this bridge is implicated in subunit movement. Contacts the P site tRNA; the 5S rRNA and some of its associated proteins might help stabilize positioning of ribosome-bound tRNAs. The polypeptide is Large ribosomal subunit protein uL5 (Salinispora tropica (strain ATCC BAA-916 / DSM 44818 / JCM 13857 / NBRC 105044 / CNB-440)).